The sequence spans 356 residues: Tungsten-containing aldehyde ferredoxin oxidoreductase cofactor-modifying protein (356 aa).

The Radical SAM core domain maps to 1 to 214 (MKYLYLEITS…PIVNELYKIA (214 aa)). The [4Fe-4S] cluster site is built by Cys-12, Cys-16, and Cys-19.

Belongs to the radical SAM superfamily. It depends on [4Fe-4S] cluster as a cofactor.

Its function is as follows. Involved in the biosynthesis of a molybdopterin-based tungsten cofactor. This Pyrococcus furiosus (strain ATCC 43587 / DSM 3638 / JCM 8422 / Vc1) protein is Tungsten-containing aldehyde ferredoxin oxidoreductase cofactor-modifying protein (cmo).